We begin with the raw amino-acid sequence, 362 residues long: Alternative oxidase, mitochondrial (362 aa).

The transit peptide at M1 to R64 directs the protein to the mitochondrion. A helical membrane pass occupies residues L156–L176. 3 residues coordinate Fe cation: E163, E202, and H205. Residues L222 to P242 form a helical membrane-spanning segment. Residues E253, E310, and H313 each coordinate Fe cation.

It belongs to the alternative oxidase family. Fe cation is required as a cofactor.

The protein localises to the mitochondrion inner membrane. Functionally, catalyzes cyanide-resistant oxygen consumption. May increase respiration when the cytochrome respiratory pathway is restricted, or in response to low temperatures. The sequence is that of Alternative oxidase, mitochondrial (aod-1) from Gelasinospora sp. (strain S23).